Consider the following 243-residue polypeptide: Clathrin light chain A (243 aa).

At Met1 the chain carries Blocked amino end (Met). Disordered regions lie at residues 1-22 and 49-87; these read MAELDPFGVPAGGPALGNGVAG and ILDGGAPGSQPHGEPPGIPDAVDGVTNGDYYQESNGPTD. A compositionally biased stretch (gly residues) spans 10–20; that stretch reads PAGGPALGNGV. The segment at 95 to 157 is involved in binding clathrin heavy chain; the sequence is VDRLQSEPES…QLQKTKANNR (63 aa). Phosphoserine is present on residues Ser100 and Ser201. Position 218 is an N6-acetyllysine (Lys218). Ser231 bears the Phosphoserine mark. Position 237 is an N6-acetyllysine (Lys237).

The protein belongs to the clathrin light chain family. As to quaternary structure, clathrin coats are formed from molecules containing 3 heavy chains and 3 light chains. Interacts with CALY; the interaction stimulates clathrin self-assembly and clathrin-mediated endocytosis. Interacts with CKAP5 and TACC3 forming the TACC3/ch-TOG/clathrin complex located at spindle inter-microtubules bridges; the complex implicates clathrin triskelions.

The protein resides in the cytoplasmic vesicle membrane. Its subcellular location is the membrane. It localises to the coated pit. The protein localises to the cytoplasm. It is found in the cytoskeleton. The protein resides in the spindle. In terms of biological role, clathrin is the major protein of the polyhedral coat of coated pits and vesicles. Acts as a component of the TACC3/ch-TOG/clathrin complex proposed to contribute to stabilization of kinetochore fibers of the mitotic spindle by acting as inter-microtubule bridge. The sequence is that of Clathrin light chain A (CLTA) from Bos taurus (Bovine).